The sequence spans 417 residues: Serine hydroxymethyltransferase 2 (417 aa).

Residues leucine 121 and 125 to 127 (GHL) contribute to the (6S)-5,6,7,8-tetrahydrofolate site. Position 229 is an N6-(pyridoxal phosphate)lysine (lysine 229). A (6S)-5,6,7,8-tetrahydrofolate-binding site is contributed by 354 to 356 (SPF).

It belongs to the SHMT family. As to quaternary structure, homodimer. It depends on pyridoxal 5'-phosphate as a cofactor.

It is found in the cytoplasm. It carries out the reaction (6R)-5,10-methylene-5,6,7,8-tetrahydrofolate + glycine + H2O = (6S)-5,6,7,8-tetrahydrofolate + L-serine. It participates in one-carbon metabolism; tetrahydrofolate interconversion. The protein operates within amino-acid biosynthesis; glycine biosynthesis; glycine from L-serine: step 1/1. In terms of biological role, catalyzes the reversible interconversion of serine and glycine with tetrahydrofolate (THF) serving as the one-carbon carrier. This reaction serves as the major source of one-carbon groups required for the biosynthesis of purines, thymidylate, methionine, and other important biomolecules. Also exhibits THF-independent aldolase activity toward beta-hydroxyamino acids, producing glycine and aldehydes, via a retro-aldol mechanism. The chain is Serine hydroxymethyltransferase 2 from Pseudomonas fluorescens (strain Pf0-1).